The sequence spans 115 residues: Nitrogenase-stabilizing/protective protein NifW (115 aa).

This sequence belongs to the NifW family. Homotrimer; associates with NifD.

Its function is as follows. May protect the nitrogenase Fe-Mo protein from oxidative damage. This Azotobacter vinelandii (strain DJ / ATCC BAA-1303) protein is Nitrogenase-stabilizing/protective protein NifW.